The following is a 38-amino-acid chain: Mu-agatoxin-Hc1b (38 aa).

Cystine bridges form between Cys3/Cys19, Cys10/Cys24, Cys18/Cys34, and Cys26/Cys32. Ser38 carries the serine amide modification.

Belongs to the neurotoxin 07 (Beta/delta-agtx) family. 02 (aga-3) subfamily. As to expression, expressed by the venom gland.

The protein resides in the secreted. Insecticidal neurotoxin that induces irreversible neuromuscular blockade in house crickets (A.domesticus). Modifies presynaptic voltage-gated sodium channels (Nav), causing them to open at the normal resting potential of the nerve. This leads to spontaneous release of neurotransmitter and repetitive action potentials in motor neurons. The protein is Mu-agatoxin-Hc1b of Hololena curta (Funnel-web spider).